A 96-amino-acid chain; its full sequence is RxLR effector protein PITG_11507 (96 aa).

Residues 1-19 (MRLSFIIVAVSLLAGGSGA) form the signal peptide. Residues 27-59 (SDVLTSRGTNEGARTGKRSLRYDSNVERTGEED) are disordered. A RxLR-dEER motif is present at residues 44 to 59 (RSLRYDSNVERTGEED). The span at 46–55 (LRYDSNVERT) shows a compositional bias: basic and acidic residues.

It belongs to the RxLR effector family.

Its subcellular location is the secreted. It localises to the host nucleus. The protein resides in the host cytoplasm. Functionally, effector that enhances P.infestans colonization of Nicotiana benthamiana leaves. This is RxLR effector protein PITG_11507 from Phytophthora infestans (strain T30-4) (Potato late blight agent).